Reading from the N-terminus, the 131-residue chain is Ribonuclease VapC3 (131 aa).

The PINc domain maps to 4–121 (VVDASAIAAL…GKLLTLDRQL (118 aa)). Mg(2+) contacts are provided by aspartate 6, aspartate 100, and aspartate 118.

This sequence belongs to the PINc/VapC protein family. As to quaternary structure, homodimer. Forms a complex with putative antitoxin VapB3, possibly VapB(2)-VapC(2). Mg(2+) serves as cofactor.

Its activity is regulated as follows. Inhibited by EDTA. Functionally, toxic component of a type II toxin-antitoxin (TA) system. Has ribonuclease activity. The polypeptide is Ribonuclease VapC3 (Pyrobaculum aerophilum (strain ATCC 51768 / DSM 7523 / JCM 9630 / CIP 104966 / NBRC 100827 / IM2)).